Consider the following 505-residue polypeptide: Maturase K (505 aa).

This sequence belongs to the intron maturase 2 family. MatK subfamily.

Its subcellular location is the plastid. The protein localises to the chloroplast. Functionally, usually encoded in the trnK tRNA gene intron. Probably assists in splicing its own and other chloroplast group II introns. This chain is Maturase K, found in Portulacaria afra (Elephant's food).